The primary structure comprises 280 residues: uncharacterized protein (280 aa).

2 disordered regions span residues Met1–Gln83 and Ile248–Leu280. Over residues Ser12–Pro25 the composition is skewed to polar residues. 2 stretches are compositionally biased toward basic and acidic residues: residues Lys41 to Asp71 and Arg249 to Leu280.

It belongs to the chlamydial CPn_0705/CT_671/TC_0042 family.

This is an uncharacterized protein from Chlamydia pneumoniae (Chlamydophila pneumoniae).